We begin with the raw amino-acid sequence, 6061 residues long: Intermembrane lipid transfer protein vps13B (6061 aa).

The 114-residue stretch at 2–115 (FESLVADIIA…QLELKRKKLE (114 aa)) folds into the Chorein N-terminal domain. Disordered stretches follow at residues 590–623 (PKYK…NNNK), 803–828 (DIKN…NNKN), 1386–1414 (QQQQ…NVSS), 1604–1644 (SSNN…GTLS), 2747–2784 (QTNQ…EDQE), 2950–2972 (GLNN…NSST), 3364–3401 (LNRN…DDDD), 3855–3876 (QQQQ…RNKK), 4011–4068 (QQQQ…FKNN), 4107–4132 (ELEK…RPDE), 4262–4297 (NSSN…YNGR), 4321–4442 (SQSI…TSPG), 4601–4631 (TSSP…KKSL), 4753–4797 (NNNN…TQEF), 4861–4882 (NAGG…SISQ), 5003–5030 (LATK…DGIE), and 5372–5429 (NINN…IGQD). Residues 595 to 614 (HQENKENKENQENQENENKN) are compositionally biased toward basic and acidic residues. The segment covering 1395–1406 (QQQKEEEQHGGE) has biased composition (basic and acidic residues). A compositionally biased stretch (polar residues) spans 2747–2756 (QTNQNNQKNR). A compositionally biased stretch (acidic residues) spans 2774-2784 (NDNDEYDEDQE). Acidic residues predominate over residues 3388–3401 (IDDDDGDGDDDDDD). A compositionally biased stretch (basic and acidic residues) spans 4015-4024 (QEKEKEIEKE). Residues 4031–4040 (LKNNNNISIN) are compositionally biased toward low complexity. A compositionally biased stretch (acidic residues) spans 4041-4057 (DNDDDDDDDDNDNDENN). Positions 4058 to 4068 (NENYEFNFKNN) are enriched in low complexity. Residues 4107-4120 (ELEKKKRERKENSK) show a composition bias toward basic and acidic residues. 2 stretches are compositionally biased toward low complexity: residues 4330-4383 (TTTT…VGSN) and 4399-4429 (NNNN…NNNN). Over residues 4430-4441 (SNDNQVNFSTSP) the composition is skewed to polar residues. Low complexity-rich tracts occupy residues 4601–4617 (TSSP…NYNN) and 4753–4784 (NNNN…SNEN). A compositionally biased stretch (polar residues) spans 4785–4794 (SQDQPPSIKT). 2 stretches are compositionally biased toward low complexity: residues 5013–5030 (DNSN…DGIE) and 5372–5384 (NINN…NNDN). Residues 5385-5409 (NKNKNNNDKNKNNDKNNKNNNDKNN) show a composition bias toward basic and acidic residues. Residues 5410–5421 (NDNNNNNNNNNN) are compositionally biased toward low complexity.

This sequence belongs to the VPS13 family.

The protein localises to the membrane. Its function is as follows. Mediates the transfer of lipids between membranes at organelle contact sites. The sequence is that of Intermembrane lipid transfer protein vps13B (vps13B) from Dictyostelium discoideum (Social amoeba).